Consider the following 451-residue polypeptide: ESX secretion system protein YukC (451 aa).

The chain crosses the membrane as a helical span at residues 221 to 241 (IGLGLIVLLVPALIYSMYALF). Residues 362 to 447 (DEDIQKELDS…KKETEKKDEK (86 aa)) adopt a coiled-coil conformation. The span at 376–386 (LEKAQKERQEN) shows a compositional bias: basic and acidic residues. Residues 376 to 451 (LEKAQKERQE…EKKDEKKDDK (76 aa)) form a disordered region. The span at 387–397 (KQSNSETSLVD) shows a compositional bias: polar residues. Basic and acidic residues predominate over residues 406–451 (DEEKQAEEKAAEEKAAAEEKAKKEEQKEKEDEKKETEKKDEKKDDK).

The protein belongs to the EssB family.

It is found in the cell membrane. In terms of biological role, required for YukE secretion. Probable component or regulator of the ESX/ESAT-6-like secretion system (BsEss). Required to deliver LXG toxins to target cells. The polypeptide is ESX secretion system protein YukC (yukC) (Bacillus subtilis (strain 168)).